Consider the following 176-residue polypeptide: Translation initiation factor IF-3 (176 aa).

The protein belongs to the IF-3 family. Monomer.

It localises to the cytoplasm. Functionally, IF-3 binds to the 30S ribosomal subunit and shifts the equilibrium between 70S ribosomes and their 50S and 30S subunits in favor of the free subunits, thus enhancing the availability of 30S subunits on which protein synthesis initiation begins. The chain is Translation initiation factor IF-3 from Streptococcus pyogenes serotype M18 (strain MGAS8232).